Reading from the N-terminus, the 319-residue chain is HTH-type transcriptional regulator YidZ (319 aa).

The HTH lysR-type domain occupies Leu-8–Thr-65. The H-T-H motif DNA-binding region spans Val-25–Ala-44.

The protein belongs to the LysR transcriptional regulatory family.

Its function is as follows. Involved in anaerobic NO protection. In Escherichia coli (strain K12 / MC4100 / BW2952), this protein is HTH-type transcriptional regulator YidZ.